The chain runs to 349 residues: 2-oxoglutarate and iron-dependent oxygenase domain-containing protein 2 (349 aa).

One can recognise a Fe2OG dioxygenase domain in the interval Asp-211–Ala-305. Residues His-231, Asp-233, and His-286 each contribute to the Fe cation site. Arg-296 provides a ligand contact to 2-oxoglutarate.

Belongs to the OGFOD2 family. Fe(2+) is required as a cofactor. L-ascorbate serves as cofactor.

The protein is 2-oxoglutarate and iron-dependent oxygenase domain-containing protein 2 (ogfod2) of Xenopus tropicalis (Western clawed frog).